Consider the following 507-residue polypeptide: Probable circularly permuted 1,3-beta-glucanase P23A10.11c YJL171C (507 aa).

A signal peptide spans Met-1–Ala-22. Over residues Ala-228 to Ser-264 the composition is skewed to low complexity. Residues Ala-228–Trp-266 are disordered. The short motif at Glu-412 to Glu-417 is the ExDxxE motif element. Asn-480 is a glycosylation site (N-linked (GlcNAc...) asparagine).

It belongs to the PGA52 family.

Its subcellular location is the secreted. It catalyses the reaction Hydrolysis of (1-&gt;3)-beta-D-glucosidic linkages in (1-&gt;3)-beta-D-glucans.. Probable circularly permuted 1,3-beta-glucanase involved in cell wall modification through beta-1,3-glucan network alterations such as increased branching or remodeling. The sequence is that of Probable circularly permuted 1,3-beta-glucanase P23A10.11c YJL171C from Schizosaccharomyces pombe (strain 972 / ATCC 24843) (Fission yeast).